The chain runs to 494 residues: Sugiol synthase (494 aa).

Residues 3–23 (SFSLLAALFFISAATWFISSR) traverse the membrane as a helical segment. Heme is bound at residue cysteine 437.

This sequence belongs to the cytochrome P450 family. It depends on heme as a cofactor. As to expression, expressed in roots.

The protein resides in the membrane. The enzyme catalyses ferruginol + 2 reduced [NADPH--hemoprotein reductase] + 2 O2 = sugiol + 2 oxidized [NADPH--hemoprotein reductase] + 3 H2O + 2 H(+). It catalyses the reaction ferruginol + reduced [NADPH--hemoprotein reductase] + O2 = 11-hydroxyferruginol + oxidized [NADPH--hemoprotein reductase] + H2O + H(+). The catalysed reaction is 11-hydroxyferruginol + 2 reduced [NADPH--hemoprotein reductase] + 2 O2 = 11-hydroxysugiol + 2 oxidized [NADPH--hemoprotein reductase] + 3 H2O + 2 H(+). The protein operates within secondary metabolite biosynthesis; terpenoid biosynthesis. In terms of biological role, monooxygenase that oxidizes ferruginol to produce sugiol. Oxidizes ferruginol at C-12 to produce 11-hydroxyferruginol. Can oxidize 11-hydroxyferruginol to 11-hydroxysugiol. These products are intermediates in tanshinone biosynthesis. This is Sugiol synthase from Salvia miltiorrhiza (Chinese sage).